We begin with the raw amino-acid sequence, 858 residues long: Leucine--tRNA ligase (858 aa).

The 'HIGH' region motif lies at 42 to 52 (PYPSGRLHMGH). A 'KMSKS' region motif is present at residues 618 to 622 (KMSKS). Lys-621 serves as a coordination point for ATP.

It belongs to the class-I aminoacyl-tRNA synthetase family.

It localises to the cytoplasm. It catalyses the reaction tRNA(Leu) + L-leucine + ATP = L-leucyl-tRNA(Leu) + AMP + diphosphate. This is Leucine--tRNA ligase from Vibrio atlanticus (strain LGP32) (Vibrio splendidus (strain Mel32)).